The following is a 1720-amino-acid chain: 6-methylcalicylic acide synthase (1720 aa).

Residues 1 to 31 form a disordered region; sequence MDKQSASGEIPAMRWEPYHRRDPRNAKELSK. One can recognise a Ketosynthase family 3 (KS3) domain in the interval 1–399; the sequence is MDKQSASGEI…GTVSHAVIEQ (399 aa). A compositionally biased stretch (basic and acidic residues) spans 16 to 30; it reads EPYHRRDPRNAKELS. Catalysis depends on for beta-ketoacyl synthase activity residues Cys-146, His-281, and His-321. The malonyl-CoA:ACP transacylase (MAT) domain stretch occupies residues 509–823; sequence VWVFSGHGAQ…IAQLHCRGAE (315 aa). An N-terminal hotdog fold region spans residues 868–987; the sequence is HTLLGQRIGI…AYWARDIQEA (120 aa). Positions 868 to 1139 are dehydratase (DH) domain; the sequence is HTLLGQRIGI…FTAMRFSEIE (272 aa). Residues 868–1144 form the PKS/mFAS DH domain; it reads HTLLGQRIGI…FSEIEGTPGV (277 aa). The active-site Proton acceptor; for dehydratase activity is His-900. The segment at 1001-1144 is C-terminal hotdog fold; that stretch reads GTRIRDDFSI…FSEIEGTPGV (144 aa). The active-site Proton donor; for dehydratase activity is Asp-1065. The tract at residues 1148-1545 is product template (PT) domain; sequence MESLVHQLAW…AVAVQWTSWR (398 aa). The 75-residue stretch at 1644–1718 folds into the Carrier domain; it reads VYLDEKIRGC…HLVGWFAEKV (75 aa). Position 1678 is an O-(pantetheine 4'-phosphoryl)serine (Ser-1678).

Its subcellular location is the cytoplasm. It localises to the cytosol. The catalysed reaction is 3 malonyl-CoA + acetyl-CoA + NADPH + 3 H(+) = 6-methylsalicylate + 3 CO2 + NADP(+) + 4 CoA + H2O. Its pathway is mycotoxin biosynthesis; patulin biosynthesis. 6-methylsalicylic acid synthase; part of the gene cluster that mediates the biosynthesis of patulin, an acetate-derived tetraketide mycotoxin produced by several fungal species that shows antimicrobial properties against several bacteria. PatK catalyzes the first step of the pathway which is the synthesis of 6-methylsalicylic acid via condensation of 1 acetate and 3 malonate units. The pathway begins with the synthesis of 6-methylsalicylic acid by the polyketide synthase (PKS) patK via condensation of acetate and malonate units. The 6-methylsalicylic acid decarboxylase patG then catalyzes the decarboxylation of 6-methylsalicylic acid to yield m-cresol (also known as 3-methylphenol). These first reactions occur in the cytosol. The intermediate m-cresol is then transported into the endoplasmic reticulum where the cytochrome P450 monooxygenase patH converts it to m-hydroxybenzyl alcohol, which is further converted to gentisyl alcohol by the cytochrome P450 monooxygenase patI. The oxidoreductases patJ and patO further convert gentisyl alcohol to isoepoxydon in the vacuole. PatN catalyzes then the transformation of isoepoxydon into phyllostine. The cluster protein patF is responsible for the conversion from phyllostine to neopatulin whereas the alcohol dehydrogenase patD converts neopatulin to E-ascladiol. The steps between isoepoxydon and E-ascladiol occur in the cytosol, and E-ascladiol is probably secreted to the extracellular space by one of the cluster-specific transporters patC or patM. Finally, the secreted patulin synthase patE catalyzes the conversion of E-ascladiol to patulin. This Aspergillus clavatus (strain ATCC 1007 / CBS 513.65 / DSM 816 / NCTC 3887 / NRRL 1 / QM 1276 / 107) protein is 6-methylcalicylic acide synthase.